Here is a 249-residue protein sequence, read N- to C-terminus: UPF0696 protein C11orf68 homolog (249 aa).

The protein belongs to the UPF0696 family.

This Danio rerio (Zebrafish) protein is UPF0696 protein C11orf68 homolog.